A 570-amino-acid chain; its full sequence is Sulfite reductase [NADPH] hemoprotein beta-component 1 (570 aa).

The [4Fe-4S] cluster site is built by Cys-434, Cys-440, Cys-479, and Cys-483. Cys-483 lines the siroheme pocket.

The protein belongs to the nitrite and sulfite reductase 4Fe-4S domain family. Alpha(8)-beta(8). The alpha component is a flavoprotein, the beta component is a hemoprotein. The cofactor is siroheme. [4Fe-4S] cluster is required as a cofactor.

The catalysed reaction is hydrogen sulfide + 3 NADP(+) + 3 H2O = sulfite + 3 NADPH + 4 H(+). It functions in the pathway sulfur metabolism; hydrogen sulfide biosynthesis; hydrogen sulfide from sulfite (NADPH route): step 1/1. In terms of biological role, component of the sulfite reductase complex that catalyzes the 6-electron reduction of sulfite to sulfide. This is one of several activities required for the biosynthesis of L-cysteine from sulfate. This is Sulfite reductase [NADPH] hemoprotein beta-component 1 from Klebsiella pneumoniae (strain 342).